We begin with the raw amino-acid sequence, 301 residues long: GTP cyclohydrolase FolE2 (301 aa).

Belongs to the GTP cyclohydrolase IV family.

The catalysed reaction is GTP + H2O = 7,8-dihydroneopterin 3'-triphosphate + formate + H(+). It participates in cofactor biosynthesis; 7,8-dihydroneopterin triphosphate biosynthesis; 7,8-dihydroneopterin triphosphate from GTP: step 1/1. Its function is as follows. Converts GTP to 7,8-dihydroneopterin triphosphate. The sequence is that of GTP cyclohydrolase FolE2 from Pseudomonas syringae pv. tomato (strain ATCC BAA-871 / DC3000).